The sequence spans 168 residues: NADH-quinone oxidoreductase subunit I (168 aa).

4Fe-4S ferredoxin-type domains lie at 58 to 88 (LRTY…IEAQ) and 99 to 128 (VRYD…EGPN). [4Fe-4S] cluster is bound by residues cysteine 68, cysteine 71, cysteine 74, cysteine 78, cysteine 108, cysteine 111, cysteine 114, and cysteine 118.

It belongs to the complex I 23 kDa subunit family. As to quaternary structure, NDH-1 is composed of 14 different subunits. Subunits NuoA, H, J, K, L, M, N constitute the membrane sector of the complex. It depends on [4Fe-4S] cluster as a cofactor.

The protein resides in the cell inner membrane. It catalyses the reaction a quinone + NADH + 5 H(+)(in) = a quinol + NAD(+) + 4 H(+)(out). Functionally, NDH-1 shuttles electrons from NADH, via FMN and iron-sulfur (Fe-S) centers, to quinones in the respiratory chain. The immediate electron acceptor for the enzyme in this species is believed to be ubiquinone. Couples the redox reaction to proton translocation (for every two electrons transferred, four hydrogen ions are translocated across the cytoplasmic membrane), and thus conserves the redox energy in a proton gradient. This Ehrlichia ruminantium (strain Gardel) protein is NADH-quinone oxidoreductase subunit I.